The sequence spans 416 residues: N-acetyl-L-cysteine deacetylase (416 aa).

5 residues coordinate Zn(2+): Cys-128, His-130, Glu-164, His-188, and His-380.

The protein belongs to the peptidase M20 family. It depends on Zn(2+) as a cofactor. Requires Co(2+) as cofactor.

The enzyme catalyses N-acetyl-L-cysteine + H2O = L-cysteine + acetate. It functions in the pathway amino-acid metabolism. Its function is as follows. Involved in a cysteine salvage pathway from S-alkylcysteine. Catalyzes the last step in this pathway, i.e. the deacetylation of N-acetyl-L-cysteine. This pathway is likely important in the catabolism of alkylated cysteine generated by proteolysis of alkylated glutathione formed in the detoxification of a wide range of electrophiles. The chain is N-acetyl-L-cysteine deacetylase from Bacillus subtilis (strain 168).